The following is a 103-amino-acid chain: Large ribosomal subunit protein eL14 (103 aa).

It belongs to the eukaryotic ribosomal protein eL14 family.

This Pyrobaculum arsenaticum (strain DSM 13514 / JCM 11321 / PZ6) protein is Large ribosomal subunit protein eL14.